We begin with the raw amino-acid sequence, 196 residues long: Dephospho-CoA kinase (196 aa).

The DPCK domain occupies 3–196 (RIGLTGNIGC…KVYEELTRDP (194 aa)). 11 to 16 (GCGKST) is an ATP binding site.

Belongs to the CoaE family.

Its subcellular location is the cytoplasm. The enzyme catalyses 3'-dephospho-CoA + ATP = ADP + CoA + H(+). It functions in the pathway cofactor biosynthesis; coenzyme A biosynthesis; CoA from (R)-pantothenate: step 5/5. Catalyzes the phosphorylation of the 3'-hydroxyl group of dephosphocoenzyme A to form coenzyme A. In Aquifex aeolicus (strain VF5), this protein is Dephospho-CoA kinase.